The primary structure comprises 548 residues: Chaperonin GroEL (548 aa).

ATP is bound by residues 30 to 33 (TLGP), lysine 51, 87 to 91 (DGTTT), glycine 415, 479 to 481 (NAA), and aspartate 495.

This sequence belongs to the chaperonin (HSP60) family. In terms of assembly, forms a cylinder of 14 subunits composed of two heptameric rings stacked back-to-back. Interacts with the co-chaperonin GroES.

It is found in the cytoplasm. The enzyme catalyses ATP + H2O + a folded polypeptide = ADP + phosphate + an unfolded polypeptide.. In terms of biological role, together with its co-chaperonin GroES, plays an essential role in assisting protein folding. The GroEL-GroES system forms a nano-cage that allows encapsulation of the non-native substrate proteins and provides a physical environment optimized to promote and accelerate protein folding. The sequence is that of Chaperonin GroEL from Nitratidesulfovibrio vulgaris (strain DSM 19637 / Miyazaki F) (Desulfovibrio vulgaris).